Reading from the N-terminus, the 205-residue chain is ATP-dependent Clp protease proteolytic subunit (205 aa).

Ser-109 functions as the Nucleophile in the catalytic mechanism. The active site involves His-134.

Belongs to the peptidase S14 family. Fourteen ClpP subunits assemble into 2 heptameric rings which stack back to back to give a disk-like structure with a central cavity, resembling the structure of eukaryotic proteasomes.

It localises to the cytoplasm. It catalyses the reaction Hydrolysis of proteins to small peptides in the presence of ATP and magnesium. alpha-casein is the usual test substrate. In the absence of ATP, only oligopeptides shorter than five residues are hydrolyzed (such as succinyl-Leu-Tyr-|-NHMec, and Leu-Tyr-Leu-|-Tyr-Trp, in which cleavage of the -Tyr-|-Leu- and -Tyr-|-Trp bonds also occurs).. Its function is as follows. Cleaves peptides in various proteins in a process that requires ATP hydrolysis. Has a chymotrypsin-like activity. Plays a major role in the degradation of misfolded proteins. The protein is ATP-dependent Clp protease proteolytic subunit of Baumannia cicadellinicola subsp. Homalodisca coagulata.